A 516-amino-acid chain; its full sequence is Facilitated glucose transporter homolog (516 aa).

The interval 1–37 (MNAVVASQNKNDRSFSNMESESSSNVEKSEKENHHQS) is disordered. Residues 1-47 (MNAVVASQNKNDRSFSNMESESSSNVEKSEKENHHQSLPDENWTPFL) are Cytoplasmic-facing. Positions 14–26 (SFSNMESESSSNV) are enriched in low complexity. Positions 27–37 (EKSEKENHHQS) are enriched in basic and acidic residues. Residues 48-68 (FFCISSIALASFQDGFQIGCI) form a helical membrane-spanning segment. The Extracellular segment spans residues 69–101 (NAPGPLIIDWIKKCHFELFGEVLSQYQADFIWS). Residues 102 to 122 (VAVSMFSVGGMFGSFCSGFLA) traverse the membrane as a helical segment. The Cytoplasmic segment spans residues 123–138 (DKFGRKSTLLYNNILA). Residues 139 to 159 (LLAAVCLSTSKLFNFYPMIVF) form a helical membrane-spanning segment. Over 160–161 (GR) the chain is Extracellular. The chain crosses the membrane as a helical span at residues 162 to 182 (FLVGLNCGITSGLVPMFLTEL). The Cytoplasmic portion of the chain corresponds to 183-200 (APANLRGKCGSFHQLNIS). The helical transmembrane segment at 201 to 221 (VAIVLSQALGLPQIFGTQVGW) threads the bilayer. A topological domain (extracellular) is located at residue P222. The helical transmembrane segment at 223 to 243 (YIFACVAIPTFLQLATIPFCV) threads the bilayer. Over 244–306 (ESPKYLISKL…SLFKGDNQWP (63 aa)) the chain is Cytoplasmic. The helical transmembrane segment at 307-327 (MIVSILMMFSQQFSGISAVTF) threads the bilayer. At 328–344 (YSTLIFKRNGLSGNEPM) the chain is on the extracellular side. A helical transmembrane segment spans residues 345-365 (YATVGFGCIKLIATFGCLFLI). Residues 366–376 (DHPKFGRKRLH) lie on the Cytoplasmic side of the membrane. A helical transmembrane segment spans residues 377 to 397 (IAGLSGMCISSILIVITLTLS). The Extracellular segment spans residues 398-409 (NAGYHWASYMNV). Residues 410 to 430 (LFILSFVVTFAFGPGPIPWFF) traverse the membrane as a helical segment. Residues 431 to 444 (TSELFDSATRGRAA) are Cytoplasmic-facing. Residues 445–465 (AVSATSNWVANWMVGLTFLPI) traverse the membrane as a helical segment. Residues 466–471 (NNIIHQ) are Extracellular-facing. Residues 472 to 492 (YAFLMFTFFTFTFAIFTWKFV) form a helical membrane-spanning segment. The Cytoplasmic segment spans residues 493 to 516 (PETKGKSPSAIRKELAFMRKRICS).

This sequence belongs to the major facilitator superfamily. Sugar transporter (TC 2.A.1.1) family. Expressed in seam cells from the early embryonic stage through the L2 stage (at protein level).

The protein localises to the cell membrane. Functionally, appears to have no transport activity for glucose. In Caenorhabditis elegans, this protein is Facilitated glucose transporter homolog.